The chain runs to 233 residues: MADS-box transcription factor 56 (233 aa).

The MADS-box domain occupies 1–61 (MVRGRTELKR…GRLYEFASAP (61 aa)). The 91-residue stretch at 87–177 (IQQVKDDTLG…RGKHRNLEAA (91 aa)) folds into the K-box domain.

It is found in the nucleus. Probable transcription factor. This chain is MADS-box transcription factor 56 (MADS56), found in Oryza sativa subsp. indica (Rice).